Consider the following 601-residue polypeptide: Nuclear receptor subfamily 2 group C member 1 (601 aa).

Positions 1–179 are required for interaction with KAT2B; that stretch reads MATIEEIAHQ…RLQRCIAFGM (179 aa). Residues 111–186 constitute a DNA-binding region (nuclear receptor); that stretch reads FDLCVVCGDK…FGMKQDSVQC (76 aa). 2 NR C4-type zinc fingers span residues 114–134 and 150–169; these read CVVC…CEGC and CRGS…CQYC. 2 positions are modified to phosphoserine: Ser198 and Ser216. At Thr221 the chain carries Phosphothreonine. Thr223 carries the phosphothreonine; by MAPK1 modification. Residue Lys251 forms a Glycyl lysine isopeptide (Lys-Gly) (interchain with G-Cter in SUMO); alternate linkage. A Glycyl lysine isopeptide (Lys-Gly) (interchain with G-Cter in SUMO2); alternate cross-link involves residue Lys251. The 243-residue stretch at 349–591 folds into the NR LBD domain; sequence GSVHLITGDS…SVIPHILKME (243 aa). Residue Ser582 is modified to Phosphoserine; by PKC. Positions 585–601 are required for interaction with NRIP1; sequence PHILKMEPGQYSKTSSL. Residue Lys589 forms a Glycyl lysine isopeptide (Lys-Gly) (interchain with G-Cter in SUMO2) linkage.

It belongs to the nuclear hormone receptor family. NR2 subfamily. In terms of assembly, homodimer. Heterodimer; with NR2C2 which is required for chromatin remodeling and for binding to promoter regions such as globin DR1 repeats. Interacts with ESR1; the interaction prevents homodimerization of ESR1 and suppresses its transcriptional activity and cell growth. Interacts with NRIP1 (via its LXXLL motifs); the interaction provides corepressor activity. Interacts with HDAC3 (via the DNA-binding domain); the interaction recruits phosphorylated NR2C1 to PML bodies for sumoylation. Interacts with HDAC4 (via the DNA-binding domain). Interacts with PIAS1; the interaction is required for sumoylation of NR2C1. Interacts with UBE2I; the interaction is required for sumoylation of NR2C1. Interacts with KAT2B; the interaction acts as a corepressor of gene expression. In terms of processing, sumoylation requires both PIAS1 and UBE2I. Sumoylation appears to dissociate NR2C1 from the PML nuclear bodies. Enhances the interaction with NRIP1 but inhibits interaction with KAT2B. In proliferating cells, stimulation by all-trans retinoic acid, activation of MAPK1-mediated phosphorylation and recruitment to PML bodies with subsequent sumoylation, suppresses OCT4 expression. Post-translationally, phosphorylated on several serine and threonine residues. Phosphorylation on Thr-223, stimulated by all-trans retinoic acid (atRA) mediates PML location and sumoylation in proliferating cells which then modulates its association with effector molecules, KAT2B and NRIP1. Phosphorylation on Ser-582 by PKC is important for protein stability and function as activator of RARB.

The protein resides in the nucleus. Its subcellular location is the PML body. In terms of biological role, orphan nuclear receptor. Binds the IR7 element in the promoter of its own gene in an autoregulatory negative feedback mechanism. Primarily repressor of a broad range of genes including ESR1 and RARB. Together with NR2C2, forms the core of the DRED (direct repeat erythroid-definitive) complex that represses embryonic and fetal globin transcription. Binds to hormone response elements (HREs) consisting of two 5'-AGGTCA-3' half site direct repeat consensus sequences. Also activator of OCT4 gene expression. Plays a fundamental role in early embryogenesis and regulates embryonic stem cell proliferation and differentiation. Mediator of retinoic acid-regulated preadipocyte proliferation. The chain is Nuclear receptor subfamily 2 group C member 1 (NR2C1) from Pongo abelii (Sumatran orangutan).